Here is a 414-residue protein sequence, read N- to C-terminus: MDLLRLREKGIFLSQRRRKWLIFMAISGVSGYGAYKVYHLPSVARKRKRLFKLFGAIVSVAELISDSAETLSMVSRDVKDFLNSDSDEIPNSLKQIAKITTSNEFTDSLSRVSQAVTIGAFRGYKSESSIGDSGIEKSSDSSVVDRVIDKVFSEAGTGFVSVVVGSFAKNLVLGFYSGKVESGVKCEGSDSSETPRWVTLLGDDKCRELLADCIERFTSTAIGVYLDKTMDINTYDQIFEGLTNPKHQDSVKDVLVSVCNGALETIVRTSHDVFTSSRSKNVIEEIEDDDFKSNGSARSKMVSESGDGVKSNGWTEAIATTLAVPSNRRFMFDVTGRVTLETTRSIIAFIMVKTFQGFRKSINVVHEEVTDRGRQAVEYVGAKSSVIITVCLALYLHIISGCVRNSPIGVSQHF.

2 consecutive transmembrane segments (helical) span residues 20-40 (WLIF…VYHL) and 379-399 (YVGA…LHII).

The protein resides in the membrane. This chain is Protein PHLOEM PROTEIN 2-LIKE A10 (PP2A10), found in Arabidopsis thaliana (Mouse-ear cress).